A 338-amino-acid polypeptide reads, in one-letter code: Malate dehydrogenase, mitochondrial (338 aa).

A mitochondrion-targeting transit peptide spans 1–24; it reads MLSALARPASAVLRRSFSTSAQNN. NAD(+) contacts are provided by residues 31 to 37 and Asp57; that span reads GASGGIG. Ser33 is a glycosylation site (O-linked (GlcNAc) serine). An N6-acetyllysine; alternate mark is found at Lys78 and Lys91. N6-succinyllysine; alternate occurs at positions 78 and 91. Arg104 and Arg110 together coordinate substrate. NAD(+)-binding positions include Asn117 and 140–142; that span reads IAN. Asn142 is a substrate binding site. N6-acetyllysine is present on Lys165. Arg176 provides a ligand contact to substrate. The residue at position 185 (Lys185) is an N6-acetyllysine; alternate. N6-succinyllysine; alternate is present on Lys185. His200 acts as the Proton acceptor in catalysis. Lys203 bears the N6-succinyllysine mark. Residues Lys215 and Lys239 each carry the N6-acetyllysine; alternate modification. 2 positions are modified to N6-succinyllysine; alternate: Lys215 and Lys239. Residue Lys239 is modified to N6-malonyllysine; alternate. Ser246 carries the phosphoserine modification. An NAD(+)-binding site is contributed by Met251. Lys269 bears the N6-succinyllysine mark. An N6-acetyllysine; alternate mark is found at Lys296, Lys301, Lys307, Lys314, and Lys324. 5 positions are modified to N6-succinyllysine; alternate: Lys296, Lys301, Lys307, Lys314, and Lys324. The residue at position 307 (Lys307) is an N6-malonyllysine; alternate. A Phosphoserine modification is found at Ser326. Lys328, Lys329, and Lys335 each carry N6-acetyllysine; alternate. N6-succinyllysine; alternate is present on Lys328. Lys329 is modified (N6-malonyllysine; alternate). At Lys335 the chain carries N6-succinyllysine; alternate.

It belongs to the LDH/MDH superfamily. MDH type 1 family. As to quaternary structure, homodimer. Post-translationally, acetylation is enhanced after treatment either with trichostin A (TCA) or with nicotinamide (NAM) with the appearance of tri- and tetraacetylations. Glucose also increases acetylation.

It is found in the mitochondrion matrix. The catalysed reaction is (S)-malate + NAD(+) = oxaloacetate + NADH + H(+). Enzyme activity is enhanced by acetylation. This Pongo abelii (Sumatran orangutan) protein is Malate dehydrogenase, mitochondrial (MDH2).